The chain runs to 139 residues: Large ribosomal subunit protein uL13 (139 aa).

Belongs to the universal ribosomal protein uL13 family. As to quaternary structure, part of the 50S ribosomal subunit.

Functionally, this protein is one of the early assembly proteins of the 50S ribosomal subunit, although it is not seen to bind rRNA by itself. It is important during the early stages of 50S assembly. The polypeptide is Large ribosomal subunit protein uL13 (Methanococcoides burtonii (strain DSM 6242 / NBRC 107633 / OCM 468 / ACE-M)).